The sequence spans 1172 residues: Laminin subunit beta-3 (1172 aa).

Positions 1 to 17 (MRPFFLLCFALPGLLHA) are cleaved as a signal peptide. One can recognise a Laminin N-terminal domain in the interval 22 to 249 (SRGACYPPVG…AVSQLRLQGS (228 aa)). N220 carries N-linked (GlcNAc...) asparagine glycosylation. Disulfide bonds link C250–C259, C252–C279, C281–C290, C293–C313, C316–C325, C318–C343, C346–C355, C358–C376, C379–C392, C381–C399, C401–C410, C413–C428, C431–C444, C433–C451, C453–C462, C465–C478, C481–C493, C483–C500, C502–C511, C519–C531, C534–C546, C536–C553, C555–C564, and C567–C578. Laminin EGF-like domains follow at residues 250–315 (CFCH…ECQR), 316–378 (CDCN…TCIS), 379–430 (CECD…GCHR), 431–480 (CDCN…GCEP), 481–533 (CACD…GCRA), and 534–580 (CDCD…VCVA). Positions 579–785 (VACHPCFQTY…SLPDLTPTFN (207 aa)) are domain II. N604 carries an N-linked (GlcNAc...) asparagine glycan. Residues 723–757 (EQSAQAAQQVSDSSRLLDQLRDSRREAERLVRQAG) adopt a coiled-coil conformation. The interval 786 to 816 (KLCGNSRQMACTPISCPGELCPQDNGTACGS) is domain alpha. N-linked (GlcNAc...) asparagine glycosylation is present at N810. Residues 817–1170 (RCRGVLPRAG…INGRVLYYAT (354 aa)) are domain I. Coiled-coil stretches lie at residues 831-884 (MAGQ…MEED) and 948-1133 (VLSQ…ELEL).

Laminin is a complex glycoprotein, consisting of three different polypeptide chains (alpha, beta, gamma), which are bound to each other by disulfide bonds into a cross-shaped molecule comprising one long and three short arms with globules at each end. Beta-3 is a subunit of laminin-5 (laminin-332 or epiligrin/kalinin/nicein). Interacts with ECM1. In terms of tissue distribution, found in the basement membranes (major component).

It localises to the secreted. The protein localises to the extracellular space. Its subcellular location is the extracellular matrix. It is found in the basement membrane. Binding to cells via a high affinity receptor, laminin is thought to mediate the attachment, migration and organization of cells into tissues during embryonic development by interacting with other extracellular matrix components. The chain is Laminin subunit beta-3 (LAMB3) from Homo sapiens (Human).